Consider the following 105-residue polypeptide: Large ribosomal subunit protein uL24 (105 aa).

The protein belongs to the universal ribosomal protein uL24 family. Part of the 50S ribosomal subunit.

One of two assembly initiator proteins, it binds directly to the 5'-end of the 23S rRNA, where it nucleates assembly of the 50S subunit. Its function is as follows. One of the proteins that surrounds the polypeptide exit tunnel on the outside of the subunit. The chain is Large ribosomal subunit protein uL24 from Hahella chejuensis (strain KCTC 2396).